A 579-amino-acid polypeptide reads, in one-letter code: Glutamine--tRNA ligase (579 aa).

The 'HIGH' region motif lies at 41–51 (PEPNGYLHIGH). ATP is bound by residues 42-44 (EPN) and 48-54 (HIGHAKA). Asp74 and Tyr218 together coordinate L-glutamine. Residues Thr237, 285–286 (RL), and 293–295 (MSK) each bind ATP. The 'KMSKS' region signature appears at 292–296 (VMSKR).

This sequence belongs to the class-I aminoacyl-tRNA synthetase family. Monomer.

It localises to the cytoplasm. It catalyses the reaction tRNA(Gln) + L-glutamine + ATP = L-glutaminyl-tRNA(Gln) + AMP + diphosphate. This Xanthomonas campestris pv. campestris (strain 8004) protein is Glutamine--tRNA ligase.